We begin with the raw amino-acid sequence, 26 residues long: Stage V sporulation protein M (26 aa).

The segment at Phe-3–Pro-9 is important for localization.

In terms of assembly, interacts with SpoIVA. May interact with the ATP-dependent protease FtsH.

It is found in the forespore outer membrane. Its function is as follows. Coordinates cortex and coat assembly during sporulation. Associates with the spore coat protein SpoIVA and with the outer forespore membrane, thereby serving as a membrane anchor that tethers SpoIVA and the entire spore coat to the forespore surface. May also serve as a competitive inhibitor of FtsH activity during sporulation. This Bacillus subtilis (strain 168) protein is Stage V sporulation protein M.